A 122-amino-acid chain; its full sequence is Hexon-interlacing protein (122 aa).

Residues 72–106 (VTELNESIDELQQKMTELEKRLKIMEEKIEEIKLA) adopt a coiled-coil conformation.

The protein belongs to the adenoviridae hexon-interlacing protein family. As to quaternary structure, homotrimer. Interacts with hexon protein; this interaction tethers the hexons together. Self-interacts with adjacent proteins. Interacts with kinesin light chain KLC1; this interaction leads to capsid disruption at the nuclear pore complex during virus entry into host cell.

The protein resides in the virion. It localises to the host nucleus. Structural component of the virion that acts as a cement protein on the capsid exterior and forms triskelion structures consisting of three molecules that stabilize three hexon trimers at the center of each icosahedral facet and fixes the peripentonal hexons. Dispensable for assembly. During virus entry, recruits the anterograde motor kinesin-1 to the capsid docked at the nuclear pore complex thereby subjecting the docked capsid to a pulling force. The resulting tension leads to capsid disruption, dispersion of capsid fragments toward cell periphery and eventually viral DNA entry into the host nucleus. In Tupaiidae (tree shrews), this protein is Hexon-interlacing protein.